A 135-amino-acid chain; its full sequence is MNTATLSSILLESHKPAKLETIPEDSYSSIFVFKWLEYLCERVGHSNVPDVLEFYYNLGWVSDKAIAKLLKFSKGIGLDDDEIETSVGKLTIADHLVSLLFIERLNGKKVSSEALDKLEWEIRRIKKGAEQYYGI.

The protein to M.jannaschii FlaE, also to FlaD.

Its subcellular location is the archaeal flagellum. The sequence is that of Putative flagella-related protein E (flaE) from Methanococcus voltae.